A 228-amino-acid polypeptide reads, in one-letter code: MEKQNIAVILARQNSKGLPLKNLRKMNGISLLGHTINAAISSKCFDRIIVSTDGGLIAEEAKNFGVEVVLRPAELASDTASSISGVIHALETIGSNSGTVTLLQPTSPLRTGAHIREAFSLFDEKIKGSVVSACPMEHHPLKTLLQINNGEYAPMRHLSDLEQPRQQLPQAFRPNGAIYINDTASLIANNCFFIAPTKLYIMSHQDSIDIDTELDLQQAENILNHKES.

This sequence belongs to the CMP-NeuNAc synthase family.

Its subcellular location is the cytoplasm. It catalyses the reaction an N-acylneuraminate + CTP = a CMP-N-acyl-beta-neuraminate + diphosphate. The chain is N-acylneuraminate cytidylyltransferase (neuA) from Neisseria meningitidis serogroup B (strain ATCC BAA-335 / MC58).